Here is a 201-residue protein sequence, read N- to C-terminus: Recombination protein RecR (201 aa).

The C4-type zinc-finger motif lies at 60 to 75; that stretch reads CHACGNVDTSDPCTIC. The Toprim domain maps to 83–178; that stretch reads TTLVVVEDVS…TITRLAHGVP (96 aa).

It belongs to the RecR family.

In terms of biological role, may play a role in DNA repair. It seems to be involved in an RecBC-independent recombinational process of DNA repair. It may act with RecF and RecO. The chain is Recombination protein RecR from Methylorubrum populi (strain ATCC BAA-705 / NCIMB 13946 / BJ001) (Methylobacterium populi).